A 310-amino-acid polypeptide reads, in one-letter code: Isoflavone reductase homolog P3 (310 aa).

Residues G12–G18, R37, and K46 contribute to the NADP(+) site. Residue K134 is the Proton acceptor of the active site. R138 is an NADP(+) binding site.

It belongs to the NmrA-type oxidoreductase family. Isoflavone reductase subfamily.

Its subcellular location is the cytoplasm. In Arabidopsis thaliana (Mouse-ear cress), this protein is Isoflavone reductase homolog P3.